We begin with the raw amino-acid sequence, 191 residues long: Small ribosomal subunit protein uS7 (191 aa).

The interval 56 to 80 (NKSGEQGDGDGESGGKAGGIKKRSL) is disordered.

It belongs to the universal ribosomal protein uS7 family. Part of the 30S ribosomal subunit. Contacts proteins S9 and S11.

Its function is as follows. One of the primary rRNA binding proteins, it binds directly to 16S rRNA where it nucleates assembly of the head domain of the 30S subunit. Is located at the subunit interface close to the decoding center, probably blocks exit of the E-site tRNA. The chain is Small ribosomal subunit protein uS7 from Coxiella burnetii (strain RSA 493 / Nine Mile phase I).